A 452-amino-acid polypeptide reads, in one-letter code: SAGA complex/transcription factor TFIID complex subunit Taf6 (452 aa).

In terms of domain architecture, Histone-fold spans 4–68 (TVWNIESIKD…TSADISSALR (65 aa)).

The protein belongs to the TAF6 family. In terms of assembly, component of the 1.8 MDa SAGA (Spt-Ada-Gcn5 acetyltransferase) complex, which is composed of 19 subunits tra1, spt7, taf5, ngg1/ada3, sgf73, spt20, spt8, taf12, taf6, hfi1/ada1, ubp8, gcn5, ada2, spt3, sgf29, taf10, taf9, sgf11 and sus1. The SAGA complex is composed of 4 modules, namely the HAT (histone acetyltransferase) module (gcn5, ada2, ngg1/ada3 and sgf29), the DUB (deubiquitinating) module (ubp8, sgf11, sgf73 and sus1), the core or TAF (TBP-associated factor) module (taf5, taf6, taf9, taf10 and taf12), and the Tra1 or SPT (Suppressor of Ty) module (tra1, hfi1/ada1, spt3, spt7, spt8 and spt20). The Tra1/SPT module binds activators, the core module recruits TBP (TATA-binding protein), the HAT module contains the histone H3 acetyltransferase gcn5, and the DUB module comprises the histone H2B deubiquitinase ubp8. Interacts with gcn5, taf5 and taf73. Component of the 1.2 MDa TFIID complex, which is composed of TATA-binding protein (TBP) and the 14 TBP-associated factors (TAFs). It comprises 1 copy of each taf1, taf2, taf3, taf7, taf8, taf11, taf13, 2 copies of each taf4, taf5, taf6, taf9, taf10, taf12, and 3 copies of taf14. In TFIID, taf6 heterodimerizes with taf9, forming ultimately an octamer consisting of a taf6-taf9 heterotetramer core flanked by taf4-taf12 dimers on either side, similar to the histone H2A-H2B-H3-H4 octamer.

The protein localises to the nucleus. Functionally, functions as a component of both the DNA-binding general transcription initiation factor complex TFIID and the transcription coactivator SAGA complex. Binding of TFIID to a promoter (with or without TATA element) is the initial step in pre-initiation complex (PIC) formation. TFIID plays a key role in the regulation of gene expression by RNA polymerase II through different activities such as transcription activator interaction, core promoter recognition and selectivity, TFIIA and TFIIB interaction, chromatin modification (histone acetylation by TAF1), facilitation of DNA opening and initiation of transcription. SAGA acts as a general cofactor required for essentially all RNA polymerase II transcription. At the promoters, SAGA is required for transcription pre-initiation complex (PIC) recruitment. It influences RNA polymerase II transcriptional activity through different activities such as TBP interaction (via core/TAF module) and promoter selectivity, interaction with transcription activators (via Tra1/SPT module), and chromatin modification through histone acetylation (via HAT module) and deubiquitination (via DUB module). SAGA preferentially acetylates histones H3 (to form H3K9ac, H3K14ac, H3K18ac and H3K23ac) and H2B and deubiquitinates histone H2B. SAGA interacts with DNA via upstream activating sequences (UASs). The protein is SAGA complex/transcription factor TFIID complex subunit Taf6 of Schizosaccharomyces pombe (strain 972 / ATCC 24843) (Fission yeast).